Consider the following 414-residue polypeptide: Ribulose bisphosphate carboxylase large chain (414 aa).

2 residues coordinate substrate: Asn-101 and Thr-151. Lys-153 functions as the Proton acceptor in the catalytic mechanism. Position 155 (Lys-155) interacts with substrate. Residues Lys-179, Asp-181, and Glu-182 each contribute to the Mg(2+) site. Position 179 is an N6-carboxylysine (Lys-179). The active-site Proton acceptor is the His-272. The substrate site is built by Arg-273, His-305, and Ser-357.

It belongs to the RuBisCO large chain family. Type I subfamily. In terms of assembly, heterohexadecamer of 8 large chains and 8 small chains; disulfide-linked. The disulfide link is formed within the large subunit homodimers. The cofactor is Mg(2+). The disulfide bond which can form in the large chain dimeric partners within the hexadecamer appears to be associated with oxidative stress and protein turnover.

Its subcellular location is the plastid. It is found in the chloroplast. The catalysed reaction is 2 (2R)-3-phosphoglycerate + 2 H(+) = D-ribulose 1,5-bisphosphate + CO2 + H2O. The enzyme catalyses D-ribulose 1,5-bisphosphate + O2 = 2-phosphoglycolate + (2R)-3-phosphoglycerate + 2 H(+). Functionally, ruBisCO catalyzes two reactions: the carboxylation of D-ribulose 1,5-bisphosphate, the primary event in carbon dioxide fixation, as well as the oxidative fragmentation of the pentose substrate in the photorespiration process. Both reactions occur simultaneously and in competition at the same active site. This chain is Ribulose bisphosphate carboxylase large chain (rbcL), found in Onychium japonicum (Japanese claw fern).